The chain runs to 431 residues: Probable zinc metalloprotease Lema_P086240 (431 aa).

Residue Asn-46 is glycosylated (N-linked (GlcNAc...) asparagine). The Zn(2+) site is built by His-117, Asp-137, and Glu-170. An N-linked (GlcNAc...) asparagine glycan is attached at Asn-185. Asp-197 contacts Zn(2+). N-linked (GlcNAc...) asparagine glycans are attached at residues Asn-258, Asn-310, Asn-349, Asn-359, and Asn-369. A Fibronectin type-III domain is found at 344–431; that stretch reads PGMPRNVTID…KSPAVYPFPG (88 aa).

Belongs to the peptidase M28 family. M28B subfamily. Zn(2+) serves as cofactor.

It is found in the secreted. The polypeptide is Probable zinc metalloprotease Lema_P086240 (Leptosphaeria maculans (strain JN3 / isolate v23.1.3 / race Av1-4-5-6-7-8) (Blackleg fungus)).